Here is a 722-residue protein sequence, read N- to C-terminus: Serine/threonine-protein kinase dkf-1 (722 aa).

Phorbol-ester/DAG-type zinc fingers lie at residues 98–148 and 186–236; these read PHVV…RNNC and PHTL…ASNC. Residues 279–407 form the PH domain; that stretch reads KKLEGWMMHF…QFIKESLQPP (129 aa). One can recognise a Protein kinase domain in the interval 426 to 685; it reads VLSDKTLGSG…IEQCLDHGWL (260 aa). Residues 432 to 440 and Lys-455 contribute to the ATP site; that span reads LGSGQFGTV. Asp-551 (proton acceptor) is an active-site residue. At Thr-588 the chain carries Phosphothreonine.

This sequence belongs to the protein kinase superfamily. CAMK Ser/Thr protein kinase family. PKD subfamily. Mg(2+) is required as a cofactor. Prolonged phosphorylation at Thr-588 results in ubiquitination and degradation. As to expression, highly expressed in embryos and at lower levels through the four larval stages in adults. Present in a region bounded by the anterior and posterior bulbs of the pharynx and an area of the tail containing the lumbar, dorsorectal and pre-anal ganglia. Expressed in neurons.

The protein resides in the cytoplasm. The protein localises to the membrane. It catalyses the reaction L-seryl-[protein] + ATP = O-phospho-L-seryl-[protein] + ADP + H(+). It carries out the reaction L-threonyl-[protein] + ATP = O-phospho-L-threonyl-[protein] + ADP + H(+). Activated by DAG and phorbol esters. Phorbol-ester/DAG-type domain 1 binds phorbol ester with high affinity and mediates accumulation at the cell periphery. Phorbol-ester/DAG-type domain 2 binds phorbol ester with low affinity but may mediate initial contact, resulting in a conformational change allowing previously occluded domain 1 to anchor the kinase. Phosphorylation on Thr-588 is then also required for activation and may also result in a further conformational change. Converts transient diacylglycerol (DAG) signals into prolonged physiological effects, independently of PKC. Role in the regulation of growth and neuromuscular control of movement. Involved in immune response to S.aureus bacterium by activating transcription factor hlh-30 downstream of phospholipase plc-1. This is Serine/threonine-protein kinase dkf-1 (dkf-1) from Caenorhabditis elegans.